The primary structure comprises 186 residues: Ribosome-recycling factor (186 aa).

This sequence belongs to the RRF family.

It is found in the cytoplasm. Functionally, responsible for the release of ribosomes from messenger RNA at the termination of protein biosynthesis. May increase the efficiency of translation by recycling ribosomes from one round of translation to another. The chain is Ribosome-recycling factor from Rhizobium leguminosarum bv. trifolii (strain WSM2304).